Here is a 252-residue protein sequence, read N- to C-terminus: tRNA pseudouridine synthase A (252 aa).

The active-site Nucleophile is the Asp-54. Tyr-112 serves as a coordination point for substrate.

The protein belongs to the tRNA pseudouridine synthase TruA family. In terms of assembly, homodimer.

The catalysed reaction is uridine(38/39/40) in tRNA = pseudouridine(38/39/40) in tRNA. Its function is as follows. Formation of pseudouridine at positions 38, 39 and 40 in the anticodon stem and loop of transfer RNAs. This Oenococcus oeni (strain ATCC BAA-331 / PSU-1) protein is tRNA pseudouridine synthase A.